The sequence spans 358 residues: Protein-arginine kinase (358 aa).

The Phosphagen kinase C-terminal domain maps to 23–250 (VWPVTTFSLA…SKLSVAEVAA (228 aa)). Residues 26-30 (VTTFS), 174-178 (KSQCF), and 203-208 (SSLLLG) contribute to the ATP site.

This sequence belongs to the ATP:guanido phosphotransferase family.

It carries out the reaction L-arginyl-[protein] + ATP = N(omega)-phospho-L-arginyl-[protein] + ADP + H(+). Catalyzes the specific phosphorylation of arginine residues in proteins. This Chlamydia pneumoniae (Chlamydophila pneumoniae) protein is Protein-arginine kinase.